Reading from the N-terminus, the 626-residue chain is tRNA 5-methylaminomethyl-2-thiouridine biosynthesis bifunctional protein MnmC (626 aa).

Residues 1-237 form a tRNA (mnm(5)s(2)U34)-methyltransferase region; that stretch reads MKGPQLDYAD…KRDMTVGVFQ (237 aa). The tract at residues 255-626 is FAD-dependent cmnm(5)s(2)U34 oxidoreductase; it reads IGSGLSGANV…RVLPNRFSQE (372 aa).

This sequence in the N-terminal section; belongs to the methyltransferase superfamily. tRNA (mnm(5)s(2)U34)-methyltransferase family. In the C-terminal section; belongs to the DAO family. FAD is required as a cofactor.

The protein resides in the cytoplasm. It catalyses the reaction 5-aminomethyl-2-thiouridine(34) in tRNA + S-adenosyl-L-methionine = 5-methylaminomethyl-2-thiouridine(34) in tRNA + S-adenosyl-L-homocysteine + H(+). In terms of biological role, catalyzes the last two steps in the biosynthesis of 5-methylaminomethyl-2-thiouridine (mnm(5)s(2)U) at the wobble position (U34) in tRNA. Catalyzes the FAD-dependent demodification of cmnm(5)s(2)U34 to nm(5)s(2)U34, followed by the transfer of a methyl group from S-adenosyl-L-methionine to nm(5)s(2)U34, to form mnm(5)s(2)U34. This chain is tRNA 5-methylaminomethyl-2-thiouridine biosynthesis bifunctional protein MnmC, found in Hahella chejuensis (strain KCTC 2396).